We begin with the raw amino-acid sequence, 61 residues long: MAKKALVNKANRKPKFAVRAYTRCQRCGRPHAVYRKFGLCRVCLRDMAHKGELPGVHKSSW.

Residues C24, C27, C40, and C43 each coordinate Zn(2+).

The protein belongs to the universal ribosomal protein uS14 family. Zinc-binding uS14 subfamily. In terms of assembly, part of the 30S ribosomal subunit. Contacts proteins S3 and S10. Zn(2+) serves as cofactor.

In terms of biological role, binds 16S rRNA, required for the assembly of 30S particles and may also be responsible for determining the conformation of the 16S rRNA at the A site. This is Small ribosomal subunit protein uS14B from Nocardia farcinica (strain IFM 10152).